The following is a 383-amino-acid chain: Chaperone protein DnaJ (383 aa).

In terms of domain architecture, J spans 6-70 (DYYDVLGVGR…QKRAAYDQYG (65 aa)). The segment at 140–222 (GKETKISYSR…CHGTGREEER (83 aa)) adopts a CR-type zinc-finger fold. Residues Cys153, Cys156, Cys170, Cys173, Cys196, Cys199, Cys210, and Cys213 each coordinate Zn(2+). CXXCXGXG motif repeat units lie at residues 153–160 (CHTCHGSG), 170–177 (CHKCHGAG), 196–203 (CDVCGGTG), and 210–217 (CDTCHGTG).

It belongs to the DnaJ family. Homodimer. Zn(2+) serves as cofactor.

The protein resides in the cytoplasm. Its function is as follows. Participates actively in the response to hyperosmotic and heat shock by preventing the aggregation of stress-denatured proteins and by disaggregating proteins, also in an autonomous, DnaK-independent fashion. Unfolded proteins bind initially to DnaJ; upon interaction with the DnaJ-bound protein, DnaK hydrolyzes its bound ATP, resulting in the formation of a stable complex. GrpE releases ADP from DnaK; ATP binding to DnaK triggers the release of the substrate protein, thus completing the reaction cycle. Several rounds of ATP-dependent interactions between DnaJ, DnaK and GrpE are required for fully efficient folding. Also involved, together with DnaK and GrpE, in the DNA replication of plasmids through activation of initiation proteins. This is Chaperone protein DnaJ from Latilactobacillus sakei (Lactobacillus sakei).